A 484-amino-acid chain; its full sequence is Aspartyl/glutamyl-tRNA(Asn/Gln) amidotransferase subunit B (484 aa).

It belongs to the GatB/GatE family. GatB subfamily. Heterotrimer of A, B and C subunits.

The enzyme catalyses L-glutamyl-tRNA(Gln) + L-glutamine + ATP + H2O = L-glutaminyl-tRNA(Gln) + L-glutamate + ADP + phosphate + H(+). It catalyses the reaction L-aspartyl-tRNA(Asn) + L-glutamine + ATP + H2O = L-asparaginyl-tRNA(Asn) + L-glutamate + ADP + phosphate + 2 H(+). Its function is as follows. Allows the formation of correctly charged Asn-tRNA(Asn) or Gln-tRNA(Gln) through the transamidation of misacylated Asp-tRNA(Asn) or Glu-tRNA(Gln) in organisms which lack either or both of asparaginyl-tRNA or glutaminyl-tRNA synthetases. The reaction takes place in the presence of glutamine and ATP through an activated phospho-Asp-tRNA(Asn) or phospho-Glu-tRNA(Gln). This chain is Aspartyl/glutamyl-tRNA(Asn/Gln) amidotransferase subunit B, found in Dechloromonas aromatica (strain RCB).